The following is a 148-amino-acid chain: Ribonuclease H (148 aa).

An RNase H type-1 domain is found at aspartate 3–alanine 144. Residues aspartate 12, glutamate 50, aspartate 72, and aspartate 136 each coordinate Mg(2+). The tract at residues glycine 125–arginine 148 is disordered.

This sequence belongs to the RNase H family. As to quaternary structure, monomer. The cofactor is Mg(2+).

Its subcellular location is the cytoplasm. The catalysed reaction is Endonucleolytic cleavage to 5'-phosphomonoester.. Endonuclease that specifically degrades the RNA of RNA-DNA hybrids. The polypeptide is Ribonuclease H (Pseudomonas aeruginosa (strain LESB58)).